Consider the following 190-residue polypeptide: A-type ATP synthase subunit E (190 aa).

Belongs to the V-ATPase E subunit family. Has multiple subunits with at least A(3), B(3), C, D, E, F, H, I and proteolipid K(x).

It localises to the cell membrane. Component of the A-type ATP synthase that produces ATP from ADP in the presence of a proton gradient across the membrane. This chain is A-type ATP synthase subunit E, found in Pyrobaculum neutrophilum (strain DSM 2338 / JCM 9278 / NBRC 100436 / V24Sta) (Thermoproteus neutrophilus).